The following is a 554-amino-acid chain: MDHKILLTPPKSLYTKCIITIIYVVSISHLNAHFITSCKQTPYPSVCDHHMSNSPLKTLDDQTDGFTFHDLVVSSTMDQAVQLHRLVSSLKQHHSLHKHATSALFDCLELYEDTIDQLNHSRRSYGQYSSPHDRQTSLSAAIANQDTCRNGFRDFKLTSSYSKYFPVQFHRNLTKSISNSLAVTKAAAEAEAVAEKYPSTGFTKFSKQRSSAGGGSHRRLLLFSDEKFPSWFPLSDRKLLEDSKTTAKADLVVAKDGSGHYTSIQQAVNAAAKLPRRNQRLVIYVKAGVYRENVVIKKSIKNVMVIGDGIDSTIVTGNRNVQDGTTTFRSATFAVSGNGFIAQGITFENTAGPEKHQAVALRSSSDFSVFYACSFKGYQDTLYLHSSRQFLRNCNIYGTVDFIFGDATAILQNCNIYARKPMSGQKNTITAQSRKEPDETTGFVIQSSTVATASETYLGRPWRSHSRTVFMKCNLGALVSPAGWLPWSGSFALSTLYYGEYGNTGAGASVSGRVKWPGYHVIKTVTEAEKFTVENFLDGNYWITATGVPVNDGL.

The N-terminal stretch at Met-1–Ala-32 is a signal peptide. The segment at His-29–Val-183 is pectinesterase inhibitor 6. N-linked (GlcNAc...) asparagine glycans are attached at residues Asn-119 and Asn-172. The segment at Asp-250–Asn-540 is pectinesterase 6. Residues Thr-327 and Gln-357 each coordinate substrate. Residue Asp-380 is the Proton donor; for pectinesterase activity of the active site. Residues Cys-394 and Cys-414 are joined by a disulfide bond. The active-site Nucleophile; for pectinesterase activity is the Asp-401. Substrate-binding residues include Arg-460 and Trp-462.

The protein in the N-terminal section; belongs to the PMEI family. This sequence in the C-terminal section; belongs to the pectinesterase family. In terms of tissue distribution, expressed in rosette leaves, flower and siliques.

It is found in the secreted. The protein resides in the cell wall. It catalyses the reaction [(1-&gt;4)-alpha-D-galacturonosyl methyl ester](n) + n H2O = [(1-&gt;4)-alpha-D-galacturonosyl](n) + n methanol + n H(+). It participates in glycan metabolism; pectin degradation; 2-dehydro-3-deoxy-D-gluconate from pectin: step 1/5. In terms of biological role, acts in the modification of cell walls via demethylesterification of cell wall pectin. This is Probable pectinesterase/pectinesterase inhibitor 6 (PME6) from Arabidopsis thaliana (Mouse-ear cress).